Reading from the N-terminus, the 227-residue chain is 2,3-bisphosphoglycerate-dependent phosphoglycerate mutase (227 aa).

Substrate contacts are provided by residues 7-14 (RHGQSEWN), 20-21 (TG), Arg59, 86-89 (ERHY), Lys97, 113-114 (RR), and 182-183 (GN). His8 functions as the Tele-phosphohistidine intermediate in the catalytic mechanism. The active-site Proton donor/acceptor is Glu86.

This sequence belongs to the phosphoglycerate mutase family. BPG-dependent PGAM subfamily. As to quaternary structure, homodimer.

The enzyme catalyses (2R)-2-phosphoglycerate = (2R)-3-phosphoglycerate. It participates in carbohydrate degradation; glycolysis; pyruvate from D-glyceraldehyde 3-phosphate: step 3/5. Its function is as follows. Catalyzes the interconversion of 2-phosphoglycerate and 3-phosphoglycerate. The chain is 2,3-bisphosphoglycerate-dependent phosphoglycerate mutase from Neisseria meningitidis serogroup A / serotype 4A (strain DSM 15465 / Z2491).